We begin with the raw amino-acid sequence, 1581 residues long: Rho guanine nucleotide exchange factor 5 (1581 aa).

Disordered stretches follow at residues 25–54, 159–274, 316–643, 659–700, 741–810, and 829–1051; these read EGIMRSSQIPALDPEAQEDRDPSYKWTDGH, VSKE…EQKQ, LRDS…RDGI, SEEF…PPTV, HSHP…PEFY, and VPII…GSSD. Residues 41 to 54 are compositionally biased toward basic and acidic residues; the sequence is QEDRDPSYKWTDGH. Positions 204 to 221 are enriched in polar residues; it reads KQLQLEATQENQGQEGFL. The span at 228–241 shows a compositional bias: acidic residues; it reads GLEEQEGQEVEIQE. 2 stretches are compositionally biased toward basic and acidic residues: residues 326-336 and 345-380; these read QESREVEERRV and RLVEKSEIVKRKQRDHDQTGKVMPVRDQKEVVDSGD. At S446 the chain carries Phosphoserine. Positions 474 to 492 are enriched in basic and acidic residues; it reads LDNRTHNSQQEEFRLRKGI. Positions 496-507 are enriched in polar residues; sequence SASTSVAPSGTR. The span at 515–531 shows a compositional bias: low complexity; the sequence is PNVFSSTATLSPVSSSV. Polar residues-rich tracts occupy residues 569-595, 603-613, 662-685, 748-760, and 779-791; these read TSDTANPHSPLSSYTGVTQHLRSNSFP, TPDSLGMSLSF, FTSNPERPSSPHGSPTWGSPQNSA, TLSSGLHRSSKGS, and TPESPNHTQTSIP. Residues 829–843 show a composition bias toward pro residues; that stretch reads VPIIDPSSEPPPLPP. Polar residues-rich tracts occupy residues 867 to 881, 889 to 905, and 912 to 925; these read PNNQDWTASTLSVGR, GRSTESLPLTSRCNNEV, and SNMTNLLSPSSPTT. 2 positions are modified to phosphoserine: S953 and S969. Residues 975 to 986 show a composition bias toward basic and acidic residues; that stretch reads KNSEKPLHHQLE. 2 positions are modified to phosphoserine: S1029 and S1110. The 185-residue stretch at 1158–1342 folds into the DH domain; sequence KLQEAKFELI…EKLIRDCNSN (185 aa). In terms of domain architecture, PH spans 1375–1488; that stretch reads LVKSGELTAL…SALAMPREEL (114 aa). An SH3 domain is found at 1494–1555; the sequence is YDSPQVQCLR…PVQQVEFISN (62 aa).

As to quaternary structure, interacts with SRC. Forms a ternary complex with SRC and the PI3K 85 kDa subunit. Interacts with and is activated by the heterodimer formed by GNB1 and GNG2. Interacts with ODAM (via C-terminus). Interacts with RHOA. Post-translationally, activation of SRC induces tyrosine phosphorylation of ARHGEF5.

It localises to the nucleus. It is found in the cytoplasm. The protein localises to the cell projection. The protein resides in the podosome. Functionally, guanine nucleotide exchange factor which activates Rho GTPases. Strongly activates RHOA. Also strongly activates RHOB, weakly activates RHOC and RHOG and shows no effect on RHOD, RHOV, RHOQ or RAC1. Involved in regulation of cell shape and actin cytoskeletal organization. Plays a role in actin organization by generating a loss of actin stress fibers and the formation of membrane ruffles and filopodia. Required for SRC-induced podosome formation. Involved in positive regulation of immature dendritic cell migration. The sequence is that of Rho guanine nucleotide exchange factor 5 from Mus musculus (Mouse).